Consider the following 400-residue polypeptide: D(3) dopamine receptor (400 aa).

At 1–32 the chain is on the extracellular side; it reads MASLSQLSGHLNYTCGAENSTGASQARPHAYY. Asn12 and Asn19 each carry an N-linked (GlcNAc...) asparagine glycan. Residues 33-55 form a helical membrane-spanning segment; the sequence is ALSYCALILAIVFGNGLVCMAVL. Residues 56-65 are Cytoplasmic-facing; the sequence is KERALQTTTN. The chain crosses the membrane as a helical span at residues 66–88; sequence YLVVSLAVADLLVATLVMPWVVY. Residues 89-104 are Extracellular-facing; that stretch reads LEVTGGVWNFSRICCD. The N-linked (GlcNAc...) asparagine glycan is linked to Asn97. Residues Cys103 and Cys181 are joined by a disulfide bond. Residues 105-126 traverse the membrane as a helical segment; the sequence is VFVTLDVMMCTASILNLCAISI. Asp110 serves as a coordination point for eticlopride. The Cytoplasmic segment spans residues 127–149; sequence DRYTAVVMPVHYQHGTGQSSCRR. Residues 150–170 traverse the membrane as a helical segment; that stretch reads VALMITAVWVLAFAVSCPLLF. At 171-187 the chain is on the extracellular side; sequence GFNTTGDPTVCSISNPD. N-linked (GlcNAc...) asparagine glycosylation is present at Asn173. A helical membrane pass occupies residues 188 to 209; sequence FVIYSSVVSFYLPFGVTVLVYA. Topologically, residues 210-329 are cytoplasmic; the sequence is RIYVVLKQRR…VPLREKKATQ (120 aa). Residues 330–351 form a helical membrane-spanning segment; the sequence is MVAIVLGAFIVCWLPFFLTHVL. Eticlopride is bound by residues Phe345 and His349. The Extracellular portion of the chain corresponds to 352 to 366; sequence NTHCQTCHVSPELYS. Cys355 and Cys358 are disulfide-bonded. The chain crosses the membrane as a helical span at residues 367 to 386; sequence ATTWLGYVNSALNPVIYTTF. The Cytoplasmic portion of the chain corresponds to 387–400; it reads NIEFRKAFLKILSC.

This sequence belongs to the G-protein coupled receptor 1 family. In terms of assembly, interacts with CLIC6. Interacts with GRK4. Interacts with PALM. Interacts with FLNA (via filamin repeat 21); increases PKA-mediated phosphorylation of FLNA. Phosphorylated by GRK4 (GRK4-alpha and GRK4-gamma). In terms of processing, palmitoylated. Brain.

Its subcellular location is the cell membrane. Its function is as follows. Dopamine receptor whose activity is mediated by G proteins which inhibit adenylyl cyclase. Promotes cell proliferation. The protein is D(3) dopamine receptor of Homo sapiens (Human).